The sequence spans 245 residues: Geranylgeranylglyceryl phosphate synthase (245 aa).

The Mg(2+) site is built by Asp22 and Ser51. Sn-glycerol 1-phosphate contacts are provided by residues 169–175 (YLEAGSG), 200–201 (GG), and 222–223 (GT).

The protein belongs to the GGGP/HepGP synthase family. Group II subfamily. In terms of assembly, homopentamer. Mg(2+) serves as cofactor.

It is found in the cytoplasm. The enzyme catalyses sn-glycerol 1-phosphate + (2E,6E,10E)-geranylgeranyl diphosphate = sn-3-O-(geranylgeranyl)glycerol 1-phosphate + diphosphate. It functions in the pathway membrane lipid metabolism; glycerophospholipid metabolism. Inhibited by EDTA in vitro. Prenyltransferase that catalyzes the transfer of the geranylgeranyl moiety of geranylgeranyl diphosphate (GGPP) to the C3 hydroxyl of sn-glycerol-1-phosphate (G1P). This reaction is the first ether-bond-formation step in the biosynthesis of archaeal membrane lipids. Cannot use sn-glycerol-3-phosphate (G3P) or dihydroxyacetonephosphate (DHAP) as substrate. This is Geranylgeranylglyceryl phosphate synthase from Methanothermobacter marburgensis (strain ATCC BAA-927 / DSM 2133 / JCM 14651 / NBRC 100331 / OCM 82 / Marburg) (Methanobacterium thermoautotrophicum).